A 139-amino-acid chain; its full sequence is UPF0251 protein Csac_0224 (139 aa).

Belongs to the UPF0251 family.

This chain is UPF0251 protein Csac_0224, found in Caldicellulosiruptor saccharolyticus (strain ATCC 43494 / DSM 8903 / Tp8T 6331).